The chain runs to 225 residues: Uracil-DNA glycosylase (225 aa).

The Proton acceptor role is filled by aspartate 65.

Belongs to the uracil-DNA glycosylase (UDG) superfamily. UNG family.

It is found in the cytoplasm. It catalyses the reaction Hydrolyzes single-stranded DNA or mismatched double-stranded DNA and polynucleotides, releasing free uracil.. Excises uracil residues from the DNA which can arise as a result of misincorporation of dUMP residues by DNA polymerase or due to deamination of cytosine. The sequence is that of Uracil-DNA glycosylase from Bacillus licheniformis (strain ATCC 14580 / DSM 13 / JCM 2505 / CCUG 7422 / NBRC 12200 / NCIMB 9375 / NCTC 10341 / NRRL NRS-1264 / Gibson 46).